Reading from the N-terminus, the 86-residue chain is Secreted transmembrane peptide 6 (86 aa).

Residues 1 to 31 form the signal peptide; that stretch reads MGMKSPNIAAFMLPLLLILFTLSSQLKVVES. The SCOOP motif motif lies at 45 to 58; the sequence is IVYTPPSRSCGTSP. The short motif at 51-53 is the SxS motif essential for MIK2 binding element; sequence SRS.

Belongs to the serine rich endogenous peptide (SCOOP) phytocytokine family. In terms of assembly, interacts with MIK2 (via extracellular leucine-rich repeat domain); this interaction triggers the formation of complex between MIK2 and the BAK1/SERK3 and SERK4 coreceptors, and subsequent BAK1 activation by phosphorylation. Mostly expressed in leaves, and, to a lower extent, in roots, stems, siliques, seeds and flowers.

It is found in the cell membrane. It localises to the secreted. The protein resides in the extracellular space. The protein localises to the apoplast. In terms of biological role, brassicaceae-specific phytocytokine (plant endogenous peptide released into the apoplast) perceived by MIK2 in a BAK1/SERK3 and SERK4 coreceptors-dependent manner, that modulates various physiological and antimicrobial processes including growth prevention and reactive oxygen species (ROS) response regulation. Prevents general growth and development. The polypeptide is Secreted transmembrane peptide 6 (Arabidopsis thaliana (Mouse-ear cress)).